Here is an 86-residue protein sequence, read N- to C-terminus: Palustrin-3b (86 aa).

A signal peptide spans 1-22 (MFTLKKPLLLIVLLGIISLSLC). Residues 23 to 36 (EQERNADEDEESEI) constitute a propeptide that is removed on maturation. Cys-81 and Cys-86 are joined by a disulfide.

Expressed by the skin glands.

Its subcellular location is the secreted. In terms of biological role, antimicrobial peptide. In Odorrana versabilis (Chinese bamboo leaf odorous frog), this protein is Palustrin-3b.